We begin with the raw amino-acid sequence, 308 residues long: MPSKASVAIVGSGNISTDLLYKLLRSDWLEPRWMVGIDPQSEGLARARKLGLETTHEGVDWLLAQSDKPDLVFEATSAYVHKAAAPKYAAAGIRAIDLTPAAVGPAVVPPANLREHLDAPNVNMITCGGQATIPIVYAVSRAVADLGGVPYAEIVASVASVSAGPGTRANIDEFTKTTSKGVETIGGARRGKAIIILNPADPPMIMRDTIFCAIPEDADRDAIAASIHEVVAQVQTYVPGYRLLNEPQFDEPSINSGGQAVVTTFVEVEGAGDYLPPYAGNLDIMTAAATKVGEEIAMQTLAVSGGKR.

12-15 (SGNI) contacts NAD(+). The active-site Acyl-thioester intermediate is the C127. NAD(+)-binding positions include 162-170 (SAGPGTRAN) and N281.

Belongs to the acetaldehyde dehydrogenase family.

The catalysed reaction is acetaldehyde + NAD(+) + CoA = acetyl-CoA + NADH + H(+). This is Acetaldehyde dehydrogenase 2 from Mycobacterium marinum (strain ATCC BAA-535 / M).